The primary structure comprises 339 residues: DNA-directed RNA polymerase subunit alpha (339 aa).

The tract at residues 1–233 (MVREEVAGST…DLFLPFLHAE (233 aa)) is alpha N-terminal domain (alpha-NTD). Positions 266–339 (GIPLNCIFID…IDLLKNKLSF (74 aa)) are alpha C-terminal domain (alpha-CTD).

The protein belongs to the RNA polymerase alpha chain family. In plastids the minimal PEP RNA polymerase catalytic core is composed of four subunits: alpha, beta, beta', and beta''. When a (nuclear-encoded) sigma factor is associated with the core the holoenzyme is formed, which can initiate transcription.

Its subcellular location is the plastid. It localises to the chloroplast. It catalyses the reaction RNA(n) + a ribonucleoside 5'-triphosphate = RNA(n+1) + diphosphate. In terms of biological role, DNA-dependent RNA polymerase catalyzes the transcription of DNA into RNA using the four ribonucleoside triphosphates as substrates. This chain is DNA-directed RNA polymerase subunit alpha, found in Psathyrostachys juncea (Russian wildrye).